Here is a 79-residue protein sequence, read N- to C-terminus: MSDVAERVKKIVIEHLGVDADKVVDNANFIEDLGADSLDTVELVMAFEEEFSVEIPDDAAETIVTVGDAVNFLEKATAA.

Residues 2-77 (SDVAERVKKI…DAVNFLEKAT (76 aa)) enclose the Carrier domain. Residue Ser37 is modified to O-(pantetheine 4'-phosphoryl)serine.

This sequence belongs to the acyl carrier protein (ACP) family. Post-translationally, 4'-phosphopantetheine is transferred from CoA to a specific serine of apo-ACP by AcpS. This modification is essential for activity because fatty acids are bound in thioester linkage to the sulfhydryl of the prosthetic group.

It is found in the cytoplasm. The protein operates within lipid metabolism; fatty acid biosynthesis. Its function is as follows. Carrier of the growing fatty acid chain in fatty acid biosynthesis. The protein is Acyl carrier protein of Methylocella silvestris (strain DSM 15510 / CIP 108128 / LMG 27833 / NCIMB 13906 / BL2).